Consider the following 225-residue polypeptide: 2-C-methyl-D-erythritol 4-phosphate cytidylyltransferase (225 aa).

The protein belongs to the IspD/TarI cytidylyltransferase family. IspD subfamily.

The catalysed reaction is 2-C-methyl-D-erythritol 4-phosphate + CTP + H(+) = 4-CDP-2-C-methyl-D-erythritol + diphosphate. The protein operates within isoprenoid biosynthesis; isopentenyl diphosphate biosynthesis via DXP pathway; isopentenyl diphosphate from 1-deoxy-D-xylulose 5-phosphate: step 2/6. Functionally, catalyzes the formation of 4-diphosphocytidyl-2-C-methyl-D-erythritol from CTP and 2-C-methyl-D-erythritol 4-phosphate (MEP). The protein is 2-C-methyl-D-erythritol 4-phosphate cytidylyltransferase of Clostridium perfringens (strain ATCC 13124 / DSM 756 / JCM 1290 / NCIMB 6125 / NCTC 8237 / Type A).